A 521-amino-acid chain; its full sequence is uncharacterized protein (521 aa).

The stretch at 14–41 (QFQQMQHQMQQQQQQQMQQQQQQQQQQQ) forms a coiled coil. Low complexity-rich tracts occupy residues 238 to 266 (LSGS…TSSS), 275 to 353 (SSTS…NNNN), and 423 to 482 (PRLS…PNNP). Disordered stretches follow at residues 238–357 (LSGS…ISGF) and 413–491 (TAVA…SNNG).

This is an uncharacterized protein from Dictyostelium discoideum (Social amoeba).